A 111-amino-acid chain; its full sequence is Class I hydrophobin SC4 (111 aa).

Residues 1–25 (MRFSLALLALPALAAAAPVPGGGKG) form the signal peptide. Intrachain disulfides connect Cys-30–Cys-37, Cys-38–Cys-72, Cys-86–Cys-92, and Cys-93–Cys-106. Residue Asn-39 is glycosylated (N-linked (GlcNAc...) asparagine).

This sequence belongs to the fungal hydrophobin family. As to quaternary structure, self-assembles to form functional amyloid fibrils called rodlets. Self-assembly into fibrillar rodlets occurs spontaneously at hydrophobic:hydrophilic interfaces and the rodlets further associate laterally to form amphipathic monolayers.

Its subcellular location is the secreted. It localises to the cell wall. Its function is as follows. Aerial growth, conidiation, and dispersal of filamentous fungi in the environment rely upon a capability of their secreting small amphipathic proteins called hydrophobins (HPBs) with low sequence identity. Class I can self-assemble into an outermost layer of rodlet bundles on aerial cell surfaces, conferring cellular hydrophobicity that supports fungal growth, development and dispersal; whereas Class II form highly ordered films at water-air interfaces through intermolecular interactions but contribute nothing to the rodlet structure. SC4 is a dikaryon-specific class I hydrophobin that contributes to the formation of aerial hyphae and fruiting bodies. Plays a role within fruiting bodies by preventing gas channels filling with water under wet conditions, probably serving uninterrupted gas exchange. SC4 cannot fully substitute for SC3. Involved in the unusual characteristic of mounds to adhere to and completely envelop adjacent fruiting bodies on mosaic colonies. The sequence is that of Class I hydrophobin SC4 from Schizophyllum commune (Split gill fungus).